The sequence spans 352 residues: C-X-C chemokine receptor type 4 (352 aa).

An important for chemokine binding and signaling region spans residues 1–21 (MEGISIYTSDNYTEEMGSGDY). The Extracellular portion of the chain corresponds to 1–38 (MEGISIYTSDNYTEEMGSGDYDSIKEPCFREENAHFNR). Residue tyrosine 7 is modified to Sulfotyrosine. An N-linked (GlcNAc...) asparagine glycan is attached at asparagine 11. Tyrosine 12 carries the post-translational modification Sulfotyrosine. Serine 18 is a glycosylation site (O-linked (Xyl...) (chondroitin sulfate) serine). At tyrosine 21 the chain carries Sulfotyrosine. Cystine bridges form between cysteine 28–cysteine 274 and cysteine 109–cysteine 186. Residues 39–63 (IFLPTIYSIIFLTGIVGNGLVILVM) form a helical membrane-spanning segment. Residues 64–77 (GYQKKLRSMTDKYR) are Cytoplasmic-facing. A helical transmembrane segment spans residues 78-99 (LHLSVADLLFVITLPFWAVDAV). The segment at 94-97 (WAVD) is chemokine binding. The Extracellular portion of the chain corresponds to 100 to 110 (ANWYFGKFLCK). Residues 111–130 (AVHVIYTVNLYSSVLILAFI) form a helical membrane-spanning segment. A chemokine binding region spans residues 113 to 117 (HVIYT). Over 131–154 (SLDRYLAIVHATNSQRPRKLLAEK) the chain is Cytoplasmic. Positions 133 to 135 (DRY) match the Important for signaling motif. The tract at residues 135–147 (YLAIVHATNSQRP) is involved in dimerization; when bound to chemokine. Residues 155–174 (VVYVGVWIPALLLTIPDFIF) form a helical membrane-spanning segment. At 175 to 195 (ANVSEADDRYICDRFYPNDLW) the chain is on the extracellular side. The segment at 186–190 (CDRFY) is chemokine binding, important for signaling. An involved in dimerization region spans residues 191-210 (PNDLWVVVFQFQHIMVGLIL). The helical transmembrane segment at 196 to 216 (VVVFQFQHIMVGLILPGIVIL) threads the bilayer. The Cytoplasmic portion of the chain corresponds to 217 to 241 (SCYCIIISKLSHSKGHQKRKALKTT). Residues 242–261 (VILILAFFACWLPYYIGISI) traverse the membrane as a helical segment. Over 262–282 (DSFILLEIIRQGCEFENTVHK) the chain is Extracellular. An involved in dimerization region spans residues 266–268 (LLE). A helical membrane pass occupies residues 283–302 (WISITEALAFFHCCLNPILY). The Cytoplasmic portion of the chain corresponds to 303–352 (AFLGAKFKTSAQHALTSVSRGSSLKILSKGKRGGHSSVSTESESSSFHSS). Residues serine 319 and serine 321 each carry the phosphoserine modification. Phosphoserine; by PKC and GRK6 occurs at positions 324 and 325. The interval 329–352 (LSKGKRGGHSSVSTESESSSFHSS) is disordered. Serine 330 is modified (phosphoserine; by GRK6). A Glycyl lysine isopeptide (Lys-Gly) (interchain with G-Cter in ubiquitin) cross-link involves residue lysine 331. Residues 337–352 (HSSVSTESESSSFHSS) are compositionally biased toward low complexity. At serine 339 the chain carries Phosphoserine; by GRK6. 2 positions are modified to phosphoserine: serine 348 and serine 351.

This sequence belongs to the G-protein coupled receptor 1 family. In terms of assembly, monomer. Can form homodimers. Interacts with CD164. Interacts with ARRB2; the interaction is dependent on the C-terminal phosphorylation of CXCR4 and allows activation of MAPK1 and MAPK3. Interacts with ARR3; the interaction is dependent on the C-terminal phosphorylation of CXCR4 and modulates calcium mobilization. Interacts with RNF113A; the interaction, enhanced by CXCL12, promotes CXCR4 ubiquitination and subsequent degradation. Interacts (via the cytoplasmic C-terminal) with ITCH (via the WW domains I and II); the interaction, enhanced by CXCL12, promotes CXCR4 ubiquitination and leads to its degradation. Interacts with extracellular ubiquitin. Interacts with DBN1; this interaction is enhanced by antigenic stimulation. Following LPS binding, may form a complex with GDF5, HSP90AA1 and HSPA8. Phosphorylated on agonist stimulation. Rapidly phosphorylated on serine and threonine residues in the C-terminal. Phosphorylation at Ser-324 and Ser-325 leads to recruitment of ITCH, ubiquitination and protein degradation. Post-translationally, ubiquitinated after ligand binding, leading to its degradation. Ubiquitinated by ITCH at the cell membrane on agonist stimulation. The ubiquitin-dependent mechanism, endosomal sorting complex required for transport (ESCRT), then targets CXCR4 for lysosomal degradation. This process is dependent also on prior Ser-/Thr-phosphorylation in the C-terminal of CXCR4. Also binding of ARRB1 to STAM negatively regulates CXCR4 sorting to lysosomes though modulating ubiquitination of SFR5S. In terms of processing, sulfation is required for efficient binding of CXCL12/SDF-1alpha and promotes its dimerization. O- and N-glycosylated. N-glycosylation can mask coreceptor function. The O-glycosylation chondroitin sulfate attachment does not affect interaction with CXCL12/SDF-1alpha nor its coreceptor activity.

The protein localises to the cell membrane. It is found in the cell junction. Its subcellular location is the early endosome. It localises to the late endosome. The protein resides in the lysosome. Its function is as follows. Receptor for the C-X-C chemokine CXCL12/SDF-1 that transduces a signal by increasing intracellular calcium ion levels and enhancing MAPK1/MAPK3 activation. Involved in the AKT signaling cascade. Plays a role in regulation of cell migration, e.g. during wound healing. Acts as a receptor for extracellular ubiquitin; leading to enhanced intracellular calcium ions and reduced cellular cAMP levels. Binds bacterial lipopolysaccharide (LPS) et mediates LPS-induced inflammatory response, including TNF secretion by monocytes. Involved in hematopoiesis and in cardiac ventricular septum formation. Also plays an essential role in vascularization of the gastrointestinal tract, probably by regulating vascular branching and/or remodeling processes in endothelial cells. Involved in cerebellar development. In the CNS, could mediate hippocampal-neuron survival. The sequence is that of C-X-C chemokine receptor type 4 (CXCR4) from Saimiri sciureus (Common squirrel monkey).